The following is a 216-amino-acid chain: Large ribosomal subunit protein uL3 (216 aa).

The residue at position 153 (Gln153) is an N5-methylglutamine.

Belongs to the universal ribosomal protein uL3 family. Part of the 50S ribosomal subunit. Forms a cluster with proteins L14 and L19. In terms of processing, methylated by PrmB.

In terms of biological role, one of the primary rRNA binding proteins, it binds directly near the 3'-end of the 23S rRNA, where it nucleates assembly of the 50S subunit. The protein is Large ribosomal subunit protein uL3 of Burkholderia ambifaria (strain MC40-6).